The primary structure comprises 347 residues: Protein pelota homolog (347 aa).

Belongs to the eukaryotic release factor 1 family. Pelota subfamily. In terms of assembly, monomer. A divalent metal cation is required as a cofactor.

The protein localises to the cytoplasm. Its function is as follows. May function in recognizing stalled ribosomes, interact with stem-loop structures in stalled mRNA molecules, and effect endonucleolytic cleavage of the mRNA. May play a role in the release non-functional ribosomes and degradation of damaged mRNAs. Has endoribonuclease activity. This chain is Protein pelota homolog, found in Methanocaldococcus jannaschii (strain ATCC 43067 / DSM 2661 / JAL-1 / JCM 10045 / NBRC 100440) (Methanococcus jannaschii).